The following is a 428-amino-acid chain: Phosphomethylpyrimidine synthase (428 aa).

Substrate contacts are provided by residues N66, M95, Y124, H163, 185-187 (SRG), 226-229 (DGLR), and E265. H269 lines the Zn(2+) pocket. Y292 is a substrate binding site. H333 contributes to the Zn(2+) binding site. The [4Fe-4S] cluster site is built by C407, C410, and C414.

The protein belongs to the ThiC family. The cofactor is [4Fe-4S] cluster.

The enzyme catalyses 5-amino-1-(5-phospho-beta-D-ribosyl)imidazole + S-adenosyl-L-methionine = 4-amino-2-methyl-5-(phosphooxymethyl)pyrimidine + CO + 5'-deoxyadenosine + formate + L-methionine + 3 H(+). Its pathway is cofactor biosynthesis; thiamine diphosphate biosynthesis. In terms of biological role, catalyzes the synthesis of the hydroxymethylpyrimidine phosphate (HMP-P) moiety of thiamine from aminoimidazole ribotide (AIR) in a radical S-adenosyl-L-methionine (SAM)-dependent reaction. This chain is Phosphomethylpyrimidine synthase, found in Thermococcus kodakarensis (strain ATCC BAA-918 / JCM 12380 / KOD1) (Pyrococcus kodakaraensis (strain KOD1)).